The sequence spans 366 residues: Chorismate synthase (366 aa).

NADP(+) contacts are provided by Arg48 and Arg54. Residues 125–127, 238–239, Gly278, 293–297, and Arg319 each bind FMN; these read RSS, NA, and KPTSS.

Belongs to the chorismate synthase family. Homotetramer. Requires FMNH2 as cofactor.

It carries out the reaction 5-O-(1-carboxyvinyl)-3-phosphoshikimate = chorismate + phosphate. It functions in the pathway metabolic intermediate biosynthesis; chorismate biosynthesis; chorismate from D-erythrose 4-phosphate and phosphoenolpyruvate: step 7/7. In terms of biological role, catalyzes the anti-1,4-elimination of the C-3 phosphate and the C-6 proR hydrogen from 5-enolpyruvylshikimate-3-phosphate (EPSP) to yield chorismate, which is the branch point compound that serves as the starting substrate for the three terminal pathways of aromatic amino acid biosynthesis. This reaction introduces a second double bond into the aromatic ring system. The polypeptide is Chorismate synthase (Neisseria meningitidis serogroup C / serotype 2a (strain ATCC 700532 / DSM 15464 / FAM18)).